The primary structure comprises 508 residues: Amphoterin-induced protein 3 (508 aa).

Residues 1 to 19 (MAWLVLLGLLLCMLGAGSG) form the signal peptide. Over 20-383 (TSDLEGVLPP…PRPEPEAFNT (364 aa)) the chain is Extracellular. The LRRNT domain maps to 25 to 61 (GVLPPDPHNCPNKCVCAADVLSCAGRGLQDLPAALPA). Intrachain disulfides connect C34/C40 and C38/C47. LRR repeat units lie at residues 62 to 83 (TAAE…WLAP), 86 to 107 (RLRA…VFTN), 110 to 131 (GLRI…DLDG), 134 to 155 (ELEK…AFQG), 158 to 178 (MLSH…NHLH), and 184 to 207 (RLRT…AALP). N107 carries N-linked (GlcNAc...) asparagine glycosylation. The region spanning 219-275 (NPLPCDCSLYHLLRRWHQRGLSALHDFEREYTCLAFKVAESRVRFFEHSRVFKNCSV) is the LRRCT domain. Cystine bridges form between C223–C251, C225–C273, and C300–C352. N272, N301, N362, and N368 each carry an N-linked (GlcNAc...) asparagine glycan. Residues 279–370 (PGLELPEEEL…HNQTLEYNVS (92 aa)) enclose the Ig-like C2-type domain. A helical transmembrane segment spans residues 384–404 (GFTTLLGCIVGLVLVLLYLFA). The Cytoplasmic segment spans residues 405 to 508 (PPCRGCCRCC…STGSEGLMMS (104 aa)).

This sequence belongs to the immunoglobulin superfamily. AMIGO family. As to quaternary structure, binds AMIGO1 or AMIGO2.

The protein localises to the membrane. Its function is as follows. May mediate heterophilic cell-cell interaction. May contribute to signal transduction through its intracellular domain. The polypeptide is Amphoterin-induced protein 3 (Rattus norvegicus (Rat)).